Reading from the N-terminus, the 603-residue chain is Cell division control protein 48 homolog B (603 aa).

ATP is bound by residues 63-70 (GPPGTGKT) and 327-334 (GPPGCSKT).

This sequence belongs to the AAA ATPase family.

The protein localises to the nucleus. The protein resides in the cytoplasm. Its subcellular location is the cytoskeleton. It is found in the phragmoplast. Functionally, probably functions in cell division and growth processes. Interacts with certain SNAREs as part of specialized membrane fusion events where vesicles from the same organelle fuse (homotypic fusion). The chain is Cell division control protein 48 homolog B (CDC48B) from Arabidopsis thaliana (Mouse-ear cress).